Consider the following 467-residue polypeptide: L-histidine transporter HutT (467 aa).

13 consecutive transmembrane segments (helical) span residues 18 to 38, 39 to 59, 71 to 91, 99 to 119, 125 to 145, 155 to 175, 200 to 220, 245 to 265, 280 to 300, 334 to 354, 358 to 378, 402 to 422, and 429 to 449; these read FMALGSAIGTGLFYGSASAIQ, MAGPAVLLAYLIGGAAVFMVM, VAGSFGHYATTYLGPMAGFIL, MVIVAIADVTAFGIYMGFWFP, IWVLGIVFLIGGLNLCNVKVF, LKVGAIVAMILAGLGIMAFGF, VGGLIASFAVVMFAFGGIEII, ILLFYVLTLFVLMCLYPWPQI, GIGSAAAVLNVVVISAAISAI, WMTVVVMGAALLIGVLLNYLI, VFLLIASIATFATVWVWLMIL, FWPYGPAMAIAFMVFIFGVLG, and AALIVGVIWVVFLVASYLLWC.

This sequence belongs to the amino acid-polyamine-organocation (APC) superfamily. Amino acid transporter (AAT) (TC 2.A.3.1) family.

It localises to the cell inner membrane. The enzyme catalyses L-histidine(out) + n H(+)(out) = L-histidine(in) + n H(+)(in). With respect to regulation, transport activity is inhibited by the proton ionophores carbonyl cyanide m-chlorophenyl hydrazine (CCCP) and 2,4-dinitrophenol (DNP), but not by valinomycin, nigericin and nonactin. Uptake is reduced in the presence of the sulfhydryl reagent N-ethylmaleimide (NEM). Uptake is not affected by arginine, lysine, proline or compounds structurally related to histidine such as imidazole, 3-amino-1,2,4-triazole and urocanate. Only 1,2,4-triazolyl-3-alanine reduces the rate of L-histidine uptake significantly. Functionally, major high-affinity histidine transporter. Binds and catalyzes the uptake of histidine into the cell. Functions as an histidine:proton symporter with high specificity for histidine. The sequence is that of L-histidine transporter HutT from Pseudomonas putida (strain ATCC 47054 / DSM 6125 / CFBP 8728 / NCIMB 11950 / KT2440).